The chain runs to 200 residues: uncharacterized protein (200 aa).

This is an uncharacterized protein from Haemophilus phage HP1 (strain HP1c1) (Bacteriophage HP1).